The chain runs to 130 residues: Small ribosomal subunit protein uS11 (130 aa).

It belongs to the universal ribosomal protein uS11 family. In terms of assembly, part of the 30S ribosomal subunit. Interacts with proteins S7 and S18. Binds to IF-3.

Its function is as follows. Located on the platform of the 30S subunit, it bridges several disparate RNA helices of the 16S rRNA. Forms part of the Shine-Dalgarno cleft in the 70S ribosome. The protein is Small ribosomal subunit protein uS11 of Prochlorococcus marinus (strain MIT 9215).